The sequence spans 392 residues: Bifunctional enzyme IspD/IspF (392 aa).

2-C-methyl-D-erythritol 4-phosphate cytidylyltransferase regions lie at residues 1–234 (MTES…MMRT) and 1–235 (MTES…MRTA). A 2-C-methyl-D-erythritol 2,4-cyclodiphosphate synthase region spans residues 235–392 (AVGMGYDVHR…AVATIQLPET (158 aa)). A divalent metal cation is bound by residues Asp241 and His243. Residues 241-243 (DVH) and 267-268 (HS) contribute to the 4-CDP-2-C-methyl-D-erythritol 2-phosphate site. His275 contacts a divalent metal cation. Residues 289-291 (DIG), 365-368 (TTTE), Phe372, and Arg375 each bind 4-CDP-2-C-methyl-D-erythritol 2-phosphate.

It in the N-terminal section; belongs to the IspD/TarI cytidylyltransferase family. IspD subfamily. In the C-terminal section; belongs to the IspF family. A divalent metal cation serves as cofactor.

It catalyses the reaction 2-C-methyl-D-erythritol 4-phosphate + CTP + H(+) = 4-CDP-2-C-methyl-D-erythritol + diphosphate. The catalysed reaction is 4-CDP-2-C-methyl-D-erythritol 2-phosphate = 2-C-methyl-D-erythritol 2,4-cyclic diphosphate + CMP. It participates in isoprenoid biosynthesis; isopentenyl diphosphate biosynthesis via DXP pathway; isopentenyl diphosphate from 1-deoxy-D-xylulose 5-phosphate: step 2/6. It functions in the pathway isoprenoid biosynthesis; isopentenyl diphosphate biosynthesis via DXP pathway; isopentenyl diphosphate from 1-deoxy-D-xylulose 5-phosphate: step 4/6. Bifunctional enzyme that catalyzes the formation of 4-diphosphocytidyl-2-C-methyl-D-erythritol from CTP and 2-C-methyl-D-erythritol 4-phosphate (MEP) (IspD), and catalyzes the conversion of 4-diphosphocytidyl-2-C-methyl-D-erythritol 2-phosphate (CDP-ME2P) to 2-C-methyl-D-erythritol 2,4-cyclodiphosphate (ME-CPP) with a corresponding release of cytidine 5-monophosphate (CMP) (IspF). This is Bifunctional enzyme IspD/IspF from Sphingopyxis alaskensis (strain DSM 13593 / LMG 18877 / RB2256) (Sphingomonas alaskensis).